A 332-amino-acid polypeptide reads, in one-letter code: C4-dicarboxylate-binding periplasmic protein DctP (332 aa).

Positions 1 to 22 (MFKPLTLIAASILAVTSFNAAA) are cleaved as a signal peptide.

It belongs to the bacterial solute-binding protein 7 family. As to quaternary structure, the complex comprises the extracytoplasmic solute receptor protein DctP, and the two transmembrane proteins DctQ and DctM.

It localises to the periplasm. Its function is as follows. Part of the tripartite ATP-independent periplasmic (TRAP) transport system DctPQM involved in C4-dicarboxylates uptake. The sequence is that of C4-dicarboxylate-binding periplasmic protein DctP from Vibrio cholerae serotype O1 (strain ATCC 39315 / El Tor Inaba N16961).